The sequence spans 354 residues: Guanine nucleotide-binding protein alpha-16 subunit (354 aa).

A lipid anchor (N-myristoyl glycine) is attached at glycine 2. A lipid anchor (S-palmitoyl cysteine) is attached at cysteine 3. The 324-residue stretch at 31 to 354 (KTVKLLLLGA…RDNLRTCGLY (324 aa)) folds into the G-alpha domain. Residues 34-47 (KLLLLGAGESGKST) form a G1 motif region. GTP contacts are provided by residues 39–46 (GAGESGKS), 174–180 (LRTRIKT), 199–203 (DVGGQ), 268–271 (NKKD), and alanine 326. Positions 46 and 180 each coordinate Mg(2+). The interval 172-180 (DVLRTRIKT) is G2 motif. The segment at 195–204 (FVVFDVGGQR) is G3 motif. The segment at 264–271 (ILFLNKKD) is G4 motif. Residues 324–329 (TCATDT) form a G5 motif region.

It belongs to the G-alpha family. G proteins are composed of 3 units; alpha, beta and gamma. The alpha chain contains the guanine nucleotide binding site.

Guanine nucleotide-binding proteins (G proteins) are involved as modulators or transducers in various transmembrane signaling systems. In the 1-cell embryo, probably together with goa-1, controls nuclear rotation and spindle elongation during mitosis. During the first embryonic cell divisons, plays a role in gpr-1/2 cortical localization and in the proper orientation of EMS blastomere mitotic spindle. The polypeptide is Guanine nucleotide-binding protein alpha-16 subunit (gpa-16) (Caenorhabditis briggsae).